A 324-amino-acid polypeptide reads, in one-letter code: Beta-ketoacyl-[acyl-carrier-protein] synthase III (324 aa).

Catalysis depends on residues Cys-114 and His-251. The interval 252–256 (QANRR) is ACP-binding. Residue Asn-281 is part of the active site.

It belongs to the thiolase-like superfamily. FabH family. In terms of assembly, homodimer.

It is found in the cytoplasm. The catalysed reaction is malonyl-[ACP] + acetyl-CoA + H(+) = 3-oxobutanoyl-[ACP] + CO2 + CoA. It participates in lipid metabolism; fatty acid biosynthesis. In terms of biological role, catalyzes the condensation reaction of fatty acid synthesis by the addition to an acyl acceptor of two carbons from malonyl-ACP. Catalyzes the first condensation reaction which initiates fatty acid synthesis and may therefore play a role in governing the total rate of fatty acid production. Possesses both acetoacetyl-ACP synthase and acetyl transacylase activities. Its substrate specificity determines the biosynthesis of branched-chain and/or straight-chain of fatty acids. The polypeptide is Beta-ketoacyl-[acyl-carrier-protein] synthase III (Paramagnetospirillum magneticum (strain ATCC 700264 / AMB-1) (Magnetospirillum magneticum)).